Reading from the N-terminus, the 173-residue chain is ATP-dependent protease subunit HslV (173 aa).

Thr2 is an active-site residue. The Na(+) site is built by Gly157, Cys160, and Thr163.

Belongs to the peptidase T1B family. HslV subfamily. As to quaternary structure, a double ring-shaped homohexamer of HslV is capped on each side by a ring-shaped HslU homohexamer. The assembly of the HslU/HslV complex is dependent on binding of ATP.

It is found in the cytoplasm. The catalysed reaction is ATP-dependent cleavage of peptide bonds with broad specificity.. Its activity is regulated as follows. Allosterically activated by HslU binding. In terms of biological role, protease subunit of a proteasome-like degradation complex believed to be a general protein degrading machinery. The polypeptide is ATP-dependent protease subunit HslV (Nitrosomonas eutropha (strain DSM 101675 / C91 / Nm57)).